We begin with the raw amino-acid sequence, 498 residues long: ATP synthase subunit beta, chloroplastic (498 aa).

172–179 (GGAGVGKT) serves as a coordination point for ATP.

The protein belongs to the ATPase alpha/beta chains family. In terms of assembly, F-type ATPases have 2 components, CF(1) - the catalytic core - and CF(0) - the membrane proton channel. CF(1) has five subunits: alpha(3), beta(3), gamma(1), delta(1), epsilon(1). CF(0) has four main subunits: a(1), b(1), b'(1) and c(9-12).

The protein localises to the plastid. Its subcellular location is the chloroplast thylakoid membrane. It catalyses the reaction ATP + H2O + 4 H(+)(in) = ADP + phosphate + 5 H(+)(out). Produces ATP from ADP in the presence of a proton gradient across the membrane. The catalytic sites are hosted primarily by the beta subunits. The sequence is that of ATP synthase subunit beta, chloroplastic from Triticum aestivum (Wheat).